The chain runs to 275 residues: 3-methyl-2-oxobutanoate hydroxymethyltransferase (275 aa).

Positions 51 and 90 each coordinate Mg(2+). 3-methyl-2-oxobutanoate contacts are provided by residues 51 to 52 (DS), Asp90, and Lys120. Glu122 contributes to the Mg(2+) binding site. Glu189 functions as the Proton acceptor in the catalytic mechanism.

Belongs to the PanB family. As to quaternary structure, homodecamer; pentamer of dimers. Requires Mg(2+) as cofactor.

It is found in the cytoplasm. It carries out the reaction 3-methyl-2-oxobutanoate + (6R)-5,10-methylene-5,6,7,8-tetrahydrofolate + H2O = 2-dehydropantoate + (6S)-5,6,7,8-tetrahydrofolate. The protein operates within cofactor biosynthesis; (R)-pantothenate biosynthesis; (R)-pantoate from 3-methyl-2-oxobutanoate: step 1/2. In terms of biological role, catalyzes the reversible reaction in which hydroxymethyl group from 5,10-methylenetetrahydrofolate is transferred onto alpha-ketoisovalerate to form ketopantoate. This chain is 3-methyl-2-oxobutanoate hydroxymethyltransferase, found in Phenylobacterium zucineum (strain HLK1).